A 79-amino-acid polypeptide reads, in one-letter code: Cyclin-dependent kinases regulatory subunit 1 (79 aa).

An N-acetylserine modification is found at serine 2.

It belongs to the CKS family. As to quaternary structure, forms a homohexamer that can probably bind six kinase subunits.

Functionally, binds to the catalytic subunit of the cyclin dependent kinases and is essential for their biological function. The chain is Cyclin-dependent kinases regulatory subunit 1 (CKS1B) from Bos taurus (Bovine).